Consider the following 262-residue polypeptide: Phosphatidylglycerol--prolipoprotein diacylglyceryl transferase (262 aa).

Transmembrane regions (helical) follow at residues 17–37, 57–77, and 92–112; these read LKVH…WILA, LVFY…ALFY, and IWEG…AMYA. A 1,2-diacyl-sn-glycero-3-phospho-(1'-sn-glycerol) is bound at residue arginine 140. 2 consecutive transmembrane segments (helical) span residues 200–220 and 234–254; these read MAVS…VEFV and WLTM…VLLA.

This sequence belongs to the Lgt family.

The protein localises to the cell inner membrane. The catalysed reaction is L-cysteinyl-[prolipoprotein] + a 1,2-diacyl-sn-glycero-3-phospho-(1'-sn-glycerol) = an S-1,2-diacyl-sn-glyceryl-L-cysteinyl-[prolipoprotein] + sn-glycerol 1-phosphate + H(+). Its pathway is protein modification; lipoprotein biosynthesis (diacylglyceryl transfer). Its function is as follows. Catalyzes the transfer of the diacylglyceryl group from phosphatidylglycerol to the sulfhydryl group of the N-terminal cysteine of a prolipoprotein, the first step in the formation of mature lipoproteins. The polypeptide is Phosphatidylglycerol--prolipoprotein diacylglyceryl transferase (Methylococcus capsulatus (strain ATCC 33009 / NCIMB 11132 / Bath)).